Reading from the N-terminus, the 375-residue chain is Queuine tRNA-ribosyltransferase (375 aa).

The active-site Proton acceptor is D93. Substrate is bound by residues 93–97, D147, Q191, and G218; that span reads DSGGF. Residues 249–255 are RNA binding; it reads GVGTPLD. Catalysis depends on D268, which acts as the Nucleophile. The segment at 273–277 is RNA binding; important for wobble base 34 recognition; it reads TRNAR. Residues C306, C308, C311, and H337 each contribute to the Zn(2+) site.

The protein belongs to the queuine tRNA-ribosyltransferase family. In terms of assembly, homodimer. Within each dimer, one monomer is responsible for RNA recognition and catalysis, while the other monomer binds to the replacement base PreQ1. It depends on Zn(2+) as a cofactor.

It carries out the reaction 7-aminomethyl-7-carbaguanine + guanosine(34) in tRNA = 7-aminomethyl-7-carbaguanosine(34) in tRNA + guanine. It participates in tRNA modification; tRNA-queuosine biosynthesis. In terms of biological role, catalyzes the base-exchange of a guanine (G) residue with the queuine precursor 7-aminomethyl-7-deazaguanine (PreQ1) at position 34 (anticodon wobble position) in tRNAs with GU(N) anticodons (tRNA-Asp, -Asn, -His and -Tyr). Catalysis occurs through a double-displacement mechanism. The nucleophile active site attacks the C1' of nucleotide 34 to detach the guanine base from the RNA, forming a covalent enzyme-RNA intermediate. The proton acceptor active site deprotonates the incoming PreQ1, allowing a nucleophilic attack on the C1' of the ribose to form the product. After dissociation, two additional enzymatic reactions on the tRNA convert PreQ1 to queuine (Q), resulting in the hypermodified nucleoside queuosine (7-(((4,5-cis-dihydroxy-2-cyclopenten-1-yl)amino)methyl)-7-deazaguanosine). In Nitratidesulfovibrio vulgaris (strain DP4) (Desulfovibrio vulgaris), this protein is Queuine tRNA-ribosyltransferase.